The primary structure comprises 392 residues: Succinate--CoA ligase [ADP-forming] subunit beta (392 aa).

The ATP-grasp domain maps to 9-236; that stretch reads RDLFERHGLP…QAAVDPLEQA (228 aa). ATP is bound by residues K45, 52–54, A94, and E99; that span reads GRG. The Mg(2+) site is built by N191 and D205. Residues N256 and 318-320 contribute to the substrate site; that span reads GIT.

Belongs to the succinate/malate CoA ligase beta subunit family. As to quaternary structure, heterotetramer of two alpha and two beta subunits. The cofactor is Mg(2+).

The catalysed reaction is succinate + ATP + CoA = succinyl-CoA + ADP + phosphate. It catalyses the reaction GTP + succinate + CoA = succinyl-CoA + GDP + phosphate. The protein operates within carbohydrate metabolism; tricarboxylic acid cycle; succinate from succinyl-CoA (ligase route): step 1/1. Its function is as follows. Succinyl-CoA synthetase functions in the citric acid cycle (TCA), coupling the hydrolysis of succinyl-CoA to the synthesis of either ATP or GTP and thus represents the only step of substrate-level phosphorylation in the TCA. The beta subunit provides nucleotide specificity of the enzyme and binds the substrate succinate, while the binding sites for coenzyme A and phosphate are found in the alpha subunit. The polypeptide is Succinate--CoA ligase [ADP-forming] subunit beta (Salinispora arenicola (strain CNS-205)).